The chain runs to 117 residues: Putative hydrolase fragment YghX (117 aa).

The segment at 91–117 (DGLSSVGGYPGNDDKGRELQQQVDPTN) is disordered.

This is Putative hydrolase fragment YghX (yghX) from Escherichia coli (strain K12).